A 23-amino-acid polypeptide reads, in one-letter code: Chaperonin GroEL (23 aa).

It belongs to the chaperonin (HSP60) family. In terms of assembly, forms a cylinder of 14 subunits composed of two heptameric rings stacked back-to-back. Interacts with the co-chaperonin GroES. In terms of processing, phosphorylated on threonine.

It is found in the cytoplasm. The enzyme catalyses ATP + H2O + a folded polypeptide = ADP + phosphate + an unfolded polypeptide.. In terms of biological role, together with its co-chaperonin GroES, plays an essential role in assisting protein folding. The GroEL-GroES system forms a nano-cage that allows encapsulation of the non-native substrate proteins and provides a physical environment optimized to promote and accelerate protein folding. The protein is Chaperonin GroEL of Acidithiobacillus ferrooxidans (Thiobacillus ferrooxidans).